The following is a 200-amino-acid chain: Dephospho-CoA kinase (200 aa).

The DPCK domain maps to 4–200 (TIGLTGSVAT…TFIERFVKNK (197 aa)). 12–17 (ATGKST) is a binding site for ATP.

It belongs to the CoaE family.

It localises to the cytoplasm. It carries out the reaction 3'-dephospho-CoA + ATP = ADP + CoA + H(+). The protein operates within cofactor biosynthesis; coenzyme A biosynthesis; CoA from (R)-pantothenate: step 5/5. Its function is as follows. Catalyzes the phosphorylation of the 3'-hydroxyl group of dephosphocoenzyme A to form coenzyme A. The protein is Dephospho-CoA kinase of Listeria monocytogenes serovar 1/2a (strain ATCC BAA-679 / EGD-e).